The chain runs to 317 residues: Porphobilinogen deaminase (317 aa).

Cys-245 carries the post-translational modification S-(dipyrrolylmethanemethyl)cysteine.

The protein belongs to the HMBS family. In terms of assembly, monomer. The cofactor is dipyrromethane.

It catalyses the reaction 4 porphobilinogen + H2O = hydroxymethylbilane + 4 NH4(+). Its pathway is porphyrin-containing compound metabolism; protoporphyrin-IX biosynthesis; coproporphyrinogen-III from 5-aminolevulinate: step 2/4. It participates in porphyrin-containing compound metabolism; chlorophyll biosynthesis. In terms of biological role, tetrapolymerization of the monopyrrole PBG into the hydroxymethylbilane pre-uroporphyrinogen in several discrete steps. The polypeptide is Porphobilinogen deaminase (Synechococcus sp. (strain CC9902)).